The chain runs to 175 residues: Adenine phosphoribosyltransferase (175 aa).

This sequence belongs to the purine/pyrimidine phosphoribosyltransferase family. As to quaternary structure, homodimer.

The protein localises to the cytoplasm. It catalyses the reaction AMP + diphosphate = 5-phospho-alpha-D-ribose 1-diphosphate + adenine. Its pathway is purine metabolism; AMP biosynthesis via salvage pathway; AMP from adenine: step 1/1. Functionally, catalyzes a salvage reaction resulting in the formation of AMP, that is energically less costly than de novo synthesis. This chain is Adenine phosphoribosyltransferase, found in Lactobacillus delbrueckii subsp. bulgaricus (strain ATCC 11842 / DSM 20081 / BCRC 10696 / JCM 1002 / NBRC 13953 / NCIMB 11778 / NCTC 12712 / WDCM 00102 / Lb 14).